The primary structure comprises 130 residues: Small ribosomal subunit protein uS9 (130 aa).

It belongs to the universal ribosomal protein uS9 family.

The protein is Small ribosomal subunit protein uS9 of Shewanella piezotolerans (strain WP3 / JCM 13877).